Consider the following 501-residue polypeptide: Probable cytosol aminopeptidase (501 aa).

2 residues coordinate Mn(2+): Lys267 and Asp272. Lys279 is an active-site residue. The Mn(2+) site is built by Asp290, Asp349, and Glu351. Arg353 is a catalytic residue.

The protein belongs to the peptidase M17 family. It depends on Mn(2+) as a cofactor.

The protein resides in the cytoplasm. The enzyme catalyses Release of an N-terminal amino acid, Xaa-|-Yaa-, in which Xaa is preferably Leu, but may be other amino acids including Pro although not Arg or Lys, and Yaa may be Pro. Amino acid amides and methyl esters are also readily hydrolyzed, but rates on arylamides are exceedingly low.. The catalysed reaction is Release of an N-terminal amino acid, preferentially leucine, but not glutamic or aspartic acids.. Its function is as follows. Presumably involved in the processing and regular turnover of intracellular proteins. Catalyzes the removal of unsubstituted N-terminal amino acids from various peptides. This Hamiltonella defensa subsp. Acyrthosiphon pisum (strain 5AT) protein is Probable cytosol aminopeptidase.